Here is a 1043-residue protein sequence, read N- to C-terminus: MPKDSSLQSILLIGSGRSSSAKAAEFDYSGTQACIAFKEEGYRVILVNNNPATIMTDDVHADAVYFEPLTVEAVEAIIAKETPDGLLATFGGQTGLNLAFQLHEAGVLKKYGVRLLGTPIEAIKRPRGGPRTFRALMHELGEPVPESEIVTSVEEAVAFAEQIGFPIIIRPAYTLGGTGGGIAENMEQFLALVEKGLNESPIHQCLIERSVAGFKEIEYEVMRDQSNTCITVCNMENVDPVGIHTGDSIVVAPSQTLTDEEYQMLRSSAVKIISALGIIGGCNIQFALDPNSKQYYLIEVNPRVSRSSALASKATGYPIAALPAKLAVGYTLAELVNPVTKTTYASFEPALDYVVVKFPRLPFDKFPHADRKLGTQMKATGEVMAIDRNMERAFQKAVQSLEGKNNGLLLPELSVKTNDELKQLLVDKDDRRFFAILELLRRGVAVEAIHKWTKIDRFFLCSFERLVALEKQAAAATLDTIEEQTFRFLKEKGCSDAFLAETWGVTELDVRNKRKELGIVPSYKMVDTCAAEFHSETDYYYSTYFGEDERKQPSGKEKVLIIGAGPIRIGQGIEFDYSSVHSVFALQKEGYETVMINNNPETVSTDFAVADRLYFEPLTLESVLDVIEAEQIKHVIVQFGGQTAINLVKGLEEAGVPLLGVTYDMIDQLEDRDRFYQLLEELDIPHVPGLVANNAEELAAKAAEIGYPVLLRPSYVIGGCGMFIVHSEAQLAALIEQGELTYPILIDAYLDGKEAEADIVTDGTDIVLPVIIEHVEKAGVHSGDSYAWLPAQTLTGEEKAKIIDYAGRIAKKLGFKGIMNIQYVIADGNVYVLEVNPRASRTVPIVSKTTGVPLAQIATKLLLGKSLVDIVDEKARGLAVMPYAVLKYPVFSTHKLPGVDPMVGPEMKSTGEGISIAATKEEAAYKAFYPYLQKKANANEVYVIGNIDAELEAEMTAKQLTIVADVPFSDWVKRDTALAVIDLGKEEGEANKRMTALSRQLLVFTERETLKLFLQALDVDHLDVQPIHGWLEKKKQAEQAVIA.

The segment at 1–402 (MPKDSSLQSI…AFQKAVQSLE (402 aa)) is carboxyphosphate synthetic domain. Positions 134-328 (RALMHELGEP…IAALPAKLAV (195 aa)) constitute an ATP-grasp 1 domain. Residues Arg170, Gly176, Gly177, Arg209, Val211, Glu216, Gly242, Ile243, His244, Gln285, and Glu299 each contribute to the ATP site. Mg(2+) contacts are provided by Gln285, Glu299, and Asn301. Gln285, Glu299, and Asn301 together coordinate Mn(2+). Oligomerization domain stretches follow at residues 403–549 (GKNN…GEDE) and 403–550 (GKNN…EDER). Carbamoyl phosphate synthetic domain stretches follow at residues 550–932 (RKQP…YPYL) and 551–932 (KQPS…YPYL). The 188-residue stretch at 676 to 863 (YQLLEELDIP…LAQIATKLLL (188 aa)) folds into the ATP-grasp 2 domain. ATP-binding residues include Arg712, Ala748, Leu750, Glu754, Gly779, Val780, His781, Ser782, Gln822, and Glu834. Mg(2+) contacts are provided by Gln822, Glu834, and Asn836. Mn(2+)-binding residues include Gln822, Glu834, and Asn836. The MGS-like domain maps to 930–1037 (PYLQKKANAN…HGWLEKKKQA (108 aa)). The allosteric domain stretch occupies residues 933 to 1043 (QKKANANEVY…KKQAEQAVIA (111 aa)).

Belongs to the CarB family. Composed of two chains; the small (or glutamine) chain promotes the hydrolysis of glutamine to ammonia, which is used by the large (or ammonia) chain to synthesize carbamoyl phosphate. Tetramer of heterodimers (alpha,beta)4. Mg(2+) is required as a cofactor. Mn(2+) serves as cofactor.

The catalysed reaction is hydrogencarbonate + L-glutamine + 2 ATP + H2O = carbamoyl phosphate + L-glutamate + 2 ADP + phosphate + 2 H(+). It carries out the reaction hydrogencarbonate + NH4(+) + 2 ATP = carbamoyl phosphate + 2 ADP + phosphate + 2 H(+). It functions in the pathway amino-acid biosynthesis; L-arginine biosynthesis; carbamoyl phosphate from bicarbonate: step 1/1. Its function is as follows. Large subunit of the glutamine-dependent carbamoyl phosphate synthetase (CPSase). CPSase catalyzes the formation of carbamoyl phosphate from the ammonia moiety of glutamine, carbonate, and phosphate donated by ATP, constituting the first step of the biosynthetic pathway leading to arginine and/or urea. The large subunit (synthetase) binds the substrates ammonia (free or transferred from glutamine from the small subunit), hydrogencarbonate and ATP and carries out an ATP-coupled ligase reaction, activating hydrogencarbonate by forming carboxy phosphate which reacts with ammonia to form carbamoyl phosphate. The chain is Carbamoyl phosphate synthase arginine-specific large chain (carB) from Geobacillus stearothermophilus (Bacillus stearothermophilus).